A 169-amino-acid chain; its full sequence is Positive control factor (169 aa).

A DNA-binding region (H-T-H motif) is located at residues 132–157 (YERIADLLGVKKSTVQTTIKRASLKM).

Functionally, positive regulatory protein that acts at the late promoter PL. The protein is Positive control factor (xpf) of Bacillus subtilis (strain 168).